A 288-amino-acid chain; its full sequence is Nucleotide-binding protein NE1849 (288 aa).

8–15 (GLSGSGKS) serves as a coordination point for ATP. Residue 57–60 (DMRS) participates in GTP binding.

Belongs to the RapZ-like family.

Functionally, displays ATPase and GTPase activities. The sequence is that of Nucleotide-binding protein NE1849 from Nitrosomonas europaea (strain ATCC 19718 / CIP 103999 / KCTC 2705 / NBRC 14298).